Consider the following 185-residue polypeptide: Crossover junction endodeoxyribonuclease RuvC (185 aa).

Active-site residues include Asp7, Glu68, and Asp141. Residues Asp7, Glu68, and Asp141 each coordinate Mg(2+).

It belongs to the RuvC family. In terms of assembly, homodimer which binds Holliday junction (HJ) DNA. The HJ becomes 2-fold symmetrical on binding to RuvC with unstacked arms; it has a different conformation from HJ DNA in complex with RuvA. In the full resolvosome a probable DNA-RuvA(4)-RuvB(12)-RuvC(2) complex forms which resolves the HJ. It depends on Mg(2+) as a cofactor.

The protein localises to the cytoplasm. It catalyses the reaction Endonucleolytic cleavage at a junction such as a reciprocal single-stranded crossover between two homologous DNA duplexes (Holliday junction).. In terms of biological role, the RuvA-RuvB-RuvC complex processes Holliday junction (HJ) DNA during genetic recombination and DNA repair. Endonuclease that resolves HJ intermediates. Cleaves cruciform DNA by making single-stranded nicks across the HJ at symmetrical positions within the homologous arms, yielding a 5'-phosphate and a 3'-hydroxyl group; requires a central core of homology in the junction. The consensus cleavage sequence is 5'-(A/T)TT(C/G)-3'. Cleavage occurs on the 3'-side of the TT dinucleotide at the point of strand exchange. HJ branch migration catalyzed by RuvA-RuvB allows RuvC to scan DNA until it finds its consensus sequence, where it cleaves and resolves the cruciform DNA. The sequence is that of Crossover junction endodeoxyribonuclease RuvC from Mycolicibacterium smegmatis (strain ATCC 700084 / mc(2)155) (Mycobacterium smegmatis).